Reading from the N-terminus, the 153-residue chain is SsrA-binding protein (153 aa).

It belongs to the SmpB family.

The protein resides in the cytoplasm. Functionally, required for rescue of stalled ribosomes mediated by trans-translation. Binds to transfer-messenger RNA (tmRNA), required for stable association of tmRNA with ribosomes. tmRNA and SmpB together mimic tRNA shape, replacing the anticodon stem-loop with SmpB. tmRNA is encoded by the ssrA gene; the 2 termini fold to resemble tRNA(Ala) and it encodes a 'tag peptide', a short internal open reading frame. During trans-translation Ala-aminoacylated tmRNA acts like a tRNA, entering the A-site of stalled ribosomes, displacing the stalled mRNA. The ribosome then switches to translate the ORF on the tmRNA; the nascent peptide is terminated with the 'tag peptide' encoded by the tmRNA and targeted for degradation. The ribosome is freed to recommence translation, which seems to be the essential function of trans-translation. The chain is SsrA-binding protein from Orientia tsutsugamushi (strain Boryong) (Rickettsia tsutsugamushi).